Consider the following 130-residue polypeptide: Small ribosomal subunit protein uS11c (130 aa).

This sequence belongs to the universal ribosomal protein uS11 family. In terms of assembly, part of the 30S ribosomal subunit.

Its subcellular location is the plastid. It localises to the chloroplast. This is Small ribosomal subunit protein uS11c from Nephroselmis olivacea (Green alga).